A 663-amino-acid chain; its full sequence is MRLRTSLGVASACASVASAALKVTEDNSTITLANDRLTSTFAKDKGRVSELFLDGQDLLGPISGNTGVGPYLDCYCIPSGFYTAGSTDPRLEVVQGTDSTGTKYAGVILNDTYTPTGQQFQQYWFLRDGETGLHTFSRLAYYNETTPFLRNLQEFRTLFRPNTELWTHLTSSEAQTAPLPSKEAIANEVVVQDATWRFNNTPNDAYYTQFSEYFTKYTFSNLWRDNSVHGLYADGTNSNGTTYGAWLVMNTKDTYYGGPLHSDLTVDGIVYNYLVSNHHGEGTPNITNGFDRTFGPQYYLFNGGKGSKSSLEDLRSEAETLADPGWNADFYDSIAKHVIGYAPSSKRGSVQGQVKLPKGSTRPIAILTVDGQYFQDNSVEASSHQYWAEMGQDGTFQLDHVKEGKYRLTVFADGIFGDFVHDGVEVQAGKVTKVQETWEQESAGVEVWRLGTPDKSSGEFLHGDAPDPTHPLHPPQHFIYWGAYDWQQDFPNGVNYTIGSSDPAVDFNTVHWSVYGPTPANPDVEYDTTHDWTINFSLDKKQLQQRKTATLTIQLAGAKTAAGNTDVYNATEPYANLALESYINEQKEPLTLLVGFNQSSSCIVRSAVSCYQVRSRMEFPADWLNVGNNVLTLHLPRNATDYETAVLPGTVYVQYDALRLELA.

The N-terminal stretch at Met1 to Ala19 is a signal peptide. N-linked (GlcNAc...) asparagine glycosylation is found at Asn27, Asn110, Asn143, Asn239, Asn285, Asn495, Asn535, Asn569, Asn597, and Asn638.

The protein belongs to the polysaccharide lyase 4 family.

It localises to the secreted. The enzyme catalyses Endotype eliminative cleavage of L-alpha-rhamnopyranosyl-(1-&gt;4)-alpha-D-galactopyranosyluronic acid bonds of rhamnogalacturonan I domains in ramified hairy regions of pectin leaving L-rhamnopyranose at the reducing end and 4-deoxy-4,5-unsaturated D-galactopyranosyluronic acid at the non-reducing end.. Functionally, pectinolytic enzymes consist of four classes of enzymes: pectin lyase, polygalacturonase, pectin methylesterase and rhamnogalacturonase. Degrades the rhamnogalacturonan I (RG-I) backbone of pectin. This Aspergillus flavus (strain ATCC 200026 / FGSC A1120 / IAM 13836 / NRRL 3357 / JCM 12722 / SRRC 167) protein is Probable rhamnogalacturonate lyase B (rglB).